The primary structure comprises 95 residues: Integration host factor subunit beta (95 aa).

This sequence belongs to the bacterial histone-like protein family. In terms of assembly, heterodimer of an alpha and a beta chain.

This protein is one of the two subunits of integration host factor, a specific DNA-binding protein that functions in genetic recombination as well as in transcriptional and translational control. The sequence is that of Integration host factor subunit beta from Shewanella halifaxensis (strain HAW-EB4).